Consider the following 1005-residue polypeptide: Translocated actin-recruiting phosphoprotein (1005 aa).

Polar residues predominate over residues Met1–Pro10. Disordered regions lie at residues Met1–Thr36, Pro74–Pro128, Ser191–Arg214, Ser343–Leu365, Trp611–Ser645, Asn661–Ala748, and Thr792–Met847. 2 stretches are compositionally biased toward low complexity: residues Thr11–Thr36 and Pro74–His121. Composition is skewed to polar residues over residues Ser191–Gly205 and Ser343–Gly357. Composition is skewed to low complexity over residues Asn661 to Ile700, Gly715 to Ser734, and Ser831 to Leu846.

Belongs to the chlamydial CPn_0572/CT_456/TC_0741 family. Phosphorylated on a tyrosine on attachment to the host cell. Tyrosine phosphorylation is temporally and spatially associated with recruitment of actin to the site of chlamydial entry. Phosphorylated Tarp seems to remain cytoplasmically exposed on the inclusion membrane at one side of internalized elementary bodies for several hours after entry.

The protein localises to the secreted. In terms of biological role, appears to initiate or participate in signaling events that regulate the actin recruitment, which ultimately leads to internalization. This chain is Translocated actin-recruiting phosphoprotein (tarP), found in Chlamydia trachomatis serovar L2 (strain ATCC VR-902B / DSM 19102 / 434/Bu).